An 87-amino-acid chain; its full sequence is Large ribosomal subunit protein bL27 (87 aa).

Belongs to the bacterial ribosomal protein bL27 family.

The chain is Large ribosomal subunit protein bL27 from Renibacterium salmoninarum (strain ATCC 33209 / DSM 20767 / JCM 11484 / NBRC 15589 / NCIMB 2235).